We begin with the raw amino-acid sequence, 287 residues long: ATP phosphoribosyltransferase (287 aa).

It belongs to the ATP phosphoribosyltransferase family. Long subfamily. The cofactor is Mg(2+).

Its subcellular location is the cytoplasm. The catalysed reaction is 1-(5-phospho-beta-D-ribosyl)-ATP + diphosphate = 5-phospho-alpha-D-ribose 1-diphosphate + ATP. It functions in the pathway amino-acid biosynthesis; L-histidine biosynthesis; L-histidine from 5-phospho-alpha-D-ribose 1-diphosphate: step 1/9. With respect to regulation, feedback inhibited by histidine. In terms of biological role, catalyzes the condensation of ATP and 5-phosphoribose 1-diphosphate to form N'-(5'-phosphoribosyl)-ATP (PR-ATP). Has a crucial role in the pathway because the rate of histidine biosynthesis seems to be controlled primarily by regulation of HisG enzymatic activity. This Methanothermobacter thermautotrophicus (strain ATCC 29096 / DSM 1053 / JCM 10044 / NBRC 100330 / Delta H) (Methanobacterium thermoautotrophicum) protein is ATP phosphoribosyltransferase (hisG).